Here is a 135-residue protein sequence, read N- to C-terminus: Ribosome-binding factor A (135 aa).

It belongs to the RbfA family. Monomer. Binds 30S ribosomal subunits, but not 50S ribosomal subunits or 70S ribosomes.

It is found in the cytoplasm. One of several proteins that assist in the late maturation steps of the functional core of the 30S ribosomal subunit. Associates with free 30S ribosomal subunits (but not with 30S subunits that are part of 70S ribosomes or polysomes). Required for efficient processing of 16S rRNA. May interact with the 5'-terminal helix region of 16S rRNA. This Bartonella quintana (strain Toulouse) (Rochalimaea quintana) protein is Ribosome-binding factor A.